The following is a 73-amino-acid chain: Large ribosomal subunit protein bL31 (73 aa).

The protein belongs to the bacterial ribosomal protein bL31 family. Type A subfamily. As to quaternary structure, part of the 50S ribosomal subunit.

In terms of biological role, binds the 23S rRNA. The chain is Large ribosomal subunit protein bL31 from Allorhizobium ampelinum (strain ATCC BAA-846 / DSM 112012 / S4) (Agrobacterium vitis (strain S4)).